A 657-amino-acid polypeptide reads, in one-letter code: MTQLAIGKPTPLGAHYDGQGVNFTLFSAHAERVELCVFDANGQEHRYDLPGHSGDIWHGYLPDARPGLRYGYRVHGPWQPAEGHRFNPAKLLIDPCARQIDGEFKDNPLLHAGHNEPDYRDNASIAPKCVVVVDHYDWEDDAPPRMPWGCTIIYEAHVKGLTYLHPEIPVEIRGTYKALGHPVMINYLKQLGITALELLPVAQFASEPRLQRMGLSNYWGYNPVAMFALHPAYACSPETALDEFRDAIKALHKAGIEVILDIVLNHSAELDLDGPLFSLRGIDNRSYYWIREDGDYHNWTGCGNTLNLSHPAVVDYASACLRYWVETCHVDGFRFDLAAVMGRTPEFRQDALLFTAIQNCPVLSQVKLIAEPWDIAPGGYQVGNFPPLFAEWNDHFRDAARRFWLHYDLPLGAFAGRFAASSDVFKRNGRLPSAAINLVTAHDGFTLRDCVCFNHKHNEANGEENRDGTNNNYSNNHGKEGLGGTLDLVERRRDSIHALLTTLLLSQGTPMLLAGDEHGHSQRGNNNAYCQDNQLTWLDWSQASSGLTAFTAALIHLRKRIPALMENRWWEEGDGNVRWLNRYAQPLSTDEWQNGPKQLQILLSDRFLIAINATLEVTEIVLPAGEWHAIPPFAGEDNPVITAVWQGPAHGLCVFQR.

The active-site Nucleophile is D336. Catalysis depends on E371, which acts as the Proton donor. The segment at 460 to 479 (ANGEENRDGTNNNYSNNHGK) is disordered.

Belongs to the glycosyl hydrolase 13 family.

The enzyme catalyses Hydrolysis of (1-&gt;6)-alpha-D-glucosidic linkages to branches with degrees of polymerization of three or four glucose residues in limit dextrin.. The protein operates within glycan degradation; glycogen degradation. Removes maltotriose and maltotetraose chains that are attached by 1,6-alpha-linkage to the limit dextrin main chain, generating a debranched limit dextrin. The polypeptide is Glycogen debranching enzyme (Escherichia coli (strain UTI89 / UPEC)).